The following is a 348-amino-acid chain: GTP 3',8-cyclase (348 aa).

The region spanning 24–242 (PFGRAVTYLR…EKQFTLTDID (219 aa)) is the Radical SAM core domain. R33 is a GTP binding site. [4Fe-4S] cluster contacts are provided by C40 and C44. Y46 provides a ligand contact to S-adenosyl-L-methionine. C47 contributes to the [4Fe-4S] cluster binding site. GTP is bound at residue R82. G86 contributes to the S-adenosyl-L-methionine binding site. A GTP-binding site is contributed by T115. An S-adenosyl-L-methionine-binding site is contributed by S139. K175 lines the GTP pocket. Residue M209 participates in S-adenosyl-L-methionine binding. Residues C272 and C275 each contribute to the [4Fe-4S] cluster site. 277–279 (RVR) is a GTP binding site. [4Fe-4S] cluster is bound at residue C289.

This sequence belongs to the radical SAM superfamily. MoaA family. As to quaternary structure, monomer and homodimer. The cofactor is [4Fe-4S] cluster.

The catalysed reaction is GTP + AH2 + S-adenosyl-L-methionine = (8S)-3',8-cyclo-7,8-dihydroguanosine 5'-triphosphate + 5'-deoxyadenosine + L-methionine + A + H(+). It functions in the pathway cofactor biosynthesis; molybdopterin biosynthesis. Catalyzes the cyclization of GTP to (8S)-3',8-cyclo-7,8-dihydroguanosine 5'-triphosphate. The protein is GTP 3',8-cyclase of Rhizobium etli (strain CIAT 652).